Consider the following 261-residue polypeptide: Acetoacetate decarboxylase 2 (261 aa).

Lys116 serves as the catalytic Schiff-base intermediate with acetoacetate.

The protein belongs to the ADC family.

It carries out the reaction acetoacetate + H(+) = acetone + CO2. Functionally, catalyzes the conversion of acetoacetate to acetone and carbon dioxide. This Mesorhizobium japonicum (strain LMG 29417 / CECT 9101 / MAFF 303099) (Mesorhizobium loti (strain MAFF 303099)) protein is Acetoacetate decarboxylase 2.